Reading from the N-terminus, the 88-residue chain is Putative regulatory protein AM1_5498 (88 aa).

It belongs to the RemA family.

The polypeptide is Putative regulatory protein AM1_5498 (Acaryochloris marina (strain MBIC 11017)).